A 198-amino-acid polypeptide reads, in one-letter code: Transcription factor FapR (198 aa).

A MaoC-like domain is found at 102-168; that stretch reads TRIARGHHLF…GRTVVDVNSY (67 aa).

Belongs to the FapR family.

Transcriptional factor involved in regulation of membrane lipid biosynthesis by repressing genes involved in fatty acid and phospholipid metabolism. The protein is Transcription factor FapR of Geobacillus thermodenitrificans (strain NG80-2).